Here is a 774-residue protein sequence, read N- to C-terminus: Chondroitin sulfate synthase 2 (774 aa).

Residues 1–15 (MRASLLLSVLRPAGP) lie on the Cytoplasmic side of the membrane. Residues 16–34 (VAVGISLGFTLSLLSVTWV) traverse the membrane as a helical; Signal-anchor for type II membrane protein segment. The Lumenal segment spans residues 35 to 774 (EEPCGPGPPQ…LFEQEQGNST (740 aa)). The disordered stretch occupies residues 37 to 103 (PCGPGPPQPG…AQPGQATKKA (67 aa)). Residues 54 to 67 (GNTNAARRPNSVQP) show a composition bias toward polar residues. N-linked (GlcNAc...) asparagine glycans are attached at residues asparagine 138 and asparagine 361. Aspartate 616 is an a divalent metal cation binding site.

This sequence belongs to the chondroitin N-acetylgalactosaminyltransferase family. As to quaternary structure, interacts with PRKN. Mn(2+) is required as a cofactor. The cofactor is Co(2+). As to expression, isoform 1, isoform 2 and isoform 3 are expressed in brain (at protein level).

It localises to the golgi apparatus. Its subcellular location is the golgi stack membrane. It is found in the cytoplasm. The protein localises to the cytosol. The protein resides in the mitochondrion. It localises to the mitochondrion matrix. The catalysed reaction is 3-O-(beta-D-GlcA-(1-&gt;3)-beta-D-GalNAc-(1-&gt;4)-beta-D-GlcA-(1-&gt;3)-beta-D-Gal-(1-&gt;3)-beta-D-Gal-(1-&gt;4)-beta-D-Xyl)-L-seryl-[protein] + UDP-N-acetyl-alpha-D-galactosamine = 3-O-(beta-D-GalNAc-(1-&gt;4)-beta-D-GlcA-(1-&gt;3)-beta-D-GalNAc-(1-&gt;4)-beta-D-GlcA-(1-&gt;3)-beta-D-Gal-(1-&gt;3)-beta-D-Gal-(1-&gt;4)-beta-D-Xyl)-L-seryl-[protein] + UDP + H(+). It carries out the reaction 3-O-{beta-D-GlcA-(1-&gt;3)-[beta-D-GalNAc-(1-&gt;4)-beta-D-GlcA-(1-&gt;3)](n)-beta-D-GalNAc-(1-&gt;4)-beta-D-GlcA-(1-&gt;3)-beta-D-Gal-(1-&gt;3)-beta-D-Gal-(1-&gt;4)-beta-D-Xyl}-L-seryl-[protein] + UDP-N-acetyl-alpha-D-galactosamine = 3-O-{[beta-D-GalNAc-(1-&gt;4)-beta-D-GlcA-(1-&gt;3)](n+1)-beta-D-GalNAc-(1-&gt;4)-beta-D-GlcA-(1-&gt;3)-beta-D-Gal-(1-&gt;3)-beta-D-Gal-(1-&gt;4)-beta-D-Xyl}-L-seryl-[protein] + UDP + H(+). It catalyses the reaction 3-O-(beta-D-GalNAc-(1-&gt;4)-beta-D-GlcA-(1-&gt;3)-beta-D-Gal-(1-&gt;3)-beta-D-Gal-(1-&gt;4)-beta-D-Xyl)-L-seryl-[protein] + UDP-alpha-D-glucuronate = 3-O-(beta-D-GlcA-(1-&gt;3)-beta-D-GalNAc-(1-&gt;4)-beta-D-GlcA-(1-&gt;3)-beta-D-Gal-(1-&gt;3)-beta-D-Gal-(1-&gt;4)-beta-D-Xyl)-L-seryl-[protein] + UDP + H(+). The enzyme catalyses 3-O-{[beta-D-GalNAc-(1-&gt;4)-beta-D-GlcA-(1-&gt;3)](n)-beta-D-GalNAc-(1-&gt;4)-beta-D-GlcA-(1-&gt;3)-beta-D-Gal-(1-&gt;3)-beta-D-Gal-(1-&gt;4)-beta-D-Xyl}-L-seryl-[protein] + UDP-alpha-D-glucuronate = 3-O-{beta-D-GlcA-(1-&gt;3)-[beta-D-GalNAc-(1-&gt;4)-beta-D-GlcA-(1-&gt;3)](n)-beta-D-GalNAc-(1-&gt;4)-beta-D-GlcA-(1-&gt;3)-beta-D-Gal-(1-&gt;3)-beta-D-Gal-(1-&gt;4)-beta-D-Xyl}-L-seryl-[protein] + UDP + H(+). In terms of biological role, has both beta-1,3-glucuronic acid and beta-1,4-N-acetylgalactosamine transferase activity. Transfers glucuronic acid (GlcUA) from UDP-GlcUA and N-acetylgalactosamine (GalNAc) from UDP-GalNAc to the non-reducing end of the elongating chondroitin polymer. Seems to act as a specific activating factor for CHSY1 in chondroitin polymerization. Functionally, may facilitate PRKN transport into the mitochondria. In collaboration with PRKN, may enhance cell viability and protect cells from oxidative stress. In Mus musculus (Mouse), this protein is Chondroitin sulfate synthase 2.